The primary structure comprises 281 residues: Diaminopimelate epimerase (281 aa).

Residues asparagine 14 and asparagine 65 each contribute to the substrate site. Residue cysteine 74 is the Proton donor of the active site. Substrate is bound by residues 75–76 (GN), asparagine 165, asparagine 198, and 216–217 (ER). The active-site Proton acceptor is cysteine 225. 226–227 (GT) contributes to the substrate binding site.

The protein belongs to the diaminopimelate epimerase family. Homodimer.

It is found in the cytoplasm. The catalysed reaction is (2S,6S)-2,6-diaminopimelate = meso-2,6-diaminopimelate. Its pathway is amino-acid biosynthesis; L-lysine biosynthesis via DAP pathway; DL-2,6-diaminopimelate from LL-2,6-diaminopimelate: step 1/1. Functionally, catalyzes the stereoinversion of LL-2,6-diaminopimelate (L,L-DAP) to meso-diaminopimelate (meso-DAP), a precursor of L-lysine and an essential component of the bacterial peptidoglycan. The polypeptide is Diaminopimelate epimerase (Leptospira interrogans serogroup Icterohaemorrhagiae serovar copenhageni (strain Fiocruz L1-130)).